The chain runs to 359 residues: MPEHDPHQENRTVSSVRLEDDAAEASLRPQSLAEFIGQRASRENLSIFIQAAKARGEAMDHVLLHGPPGLGKTTLAQIVSRELGVGFRATSGPVIQRAGDLAAILTNLQPRDVLFIDEIHRLQPAIEEVLYPAMEDFQLDLIIGEGPAARSVRIDLAPFTLVAATTRAGLLATPLRDRFGIPLRLIFYTASELELIVSRGAEKLGFDLSREGAAEIARRSRGTPRIAGRLLRRVRDFAMVQGVSPVDRSTADAALQRLEVDSLGLDAMDRRYLHRIAVHHAGGPVGVETLAAALAEARDTLEDVIEPYLIQEGLILRTSRGRMLGEAGWRHLGLVPPPSAAGGQPDMLTLLHRDGSADE.

Residues 1-10 show a composition bias toward basic and acidic residues; it reads MPEHDPHQEN. Residues 1-20 are disordered; the sequence is MPEHDPHQENRTVSSVRLED. Positions 4–188 are large ATPase domain (RuvB-L); it reads HDPHQENRTV…FGIPLRLIFY (185 aa). Residues Leu-27, Arg-28, Gly-69, Lys-72, Thr-73, Thr-74, 135–137, Arg-178, Tyr-188, and Arg-225 each bind ATP; that span reads EDF. Position 73 (Thr-73) interacts with Mg(2+). A small ATPAse domain (RuvB-S) region spans residues 189 to 259; the sequence is TASELELIVS…TADAALQRLE (71 aa). The head domain (RuvB-H) stretch occupies residues 262-359; the sequence is SLGLDAMDRR…LLHRDGSADE (98 aa). Positions 298, 317, and 322 each coordinate DNA.

The protein belongs to the RuvB family. Homohexamer. Forms an RuvA(8)-RuvB(12)-Holliday junction (HJ) complex. HJ DNA is sandwiched between 2 RuvA tetramers; dsDNA enters through RuvA and exits via RuvB. An RuvB hexamer assembles on each DNA strand where it exits the tetramer. Each RuvB hexamer is contacted by two RuvA subunits (via domain III) on 2 adjacent RuvB subunits; this complex drives branch migration. In the full resolvosome a probable DNA-RuvA(4)-RuvB(12)-RuvC(2) complex forms which resolves the HJ.

The protein resides in the cytoplasm. The enzyme catalyses ATP + H2O = ADP + phosphate + H(+). In terms of biological role, the RuvA-RuvB-RuvC complex processes Holliday junction (HJ) DNA during genetic recombination and DNA repair, while the RuvA-RuvB complex plays an important role in the rescue of blocked DNA replication forks via replication fork reversal (RFR). RuvA specifically binds to HJ cruciform DNA, conferring on it an open structure. The RuvB hexamer acts as an ATP-dependent pump, pulling dsDNA into and through the RuvAB complex. RuvB forms 2 homohexamers on either side of HJ DNA bound by 1 or 2 RuvA tetramers; 4 subunits per hexamer contact DNA at a time. Coordinated motions by a converter formed by DNA-disengaged RuvB subunits stimulates ATP hydrolysis and nucleotide exchange. Immobilization of the converter enables RuvB to convert the ATP-contained energy into a lever motion, pulling 2 nucleotides of DNA out of the RuvA tetramer per ATP hydrolyzed, thus driving DNA branch migration. The RuvB motors rotate together with the DNA substrate, which together with the progressing nucleotide cycle form the mechanistic basis for DNA recombination by continuous HJ branch migration. Branch migration allows RuvC to scan DNA until it finds its consensus sequence, where it cleaves and resolves cruciform DNA. In Granulibacter bethesdensis (strain ATCC BAA-1260 / CGDNIH1), this protein is Holliday junction branch migration complex subunit RuvB.